A 238-amino-acid polypeptide reads, in one-letter code: Ribonuclease PH (238 aa).

Residues Arg-86 and 124–126 (GTR) each bind phosphate.

This sequence belongs to the RNase PH family. In terms of assembly, homohexameric ring arranged as a trimer of dimers.

The enzyme catalyses tRNA(n+1) + phosphate = tRNA(n) + a ribonucleoside 5'-diphosphate. Functionally, phosphorolytic 3'-5' exoribonuclease that plays an important role in tRNA 3'-end maturation. Removes nucleotide residues following the 3'-CCA terminus of tRNAs; can also add nucleotides to the ends of RNA molecules by using nucleoside diphosphates as substrates, but this may not be physiologically important. Probably plays a role in initiation of 16S rRNA degradation (leading to ribosome degradation) during starvation. This chain is Ribonuclease PH, found in Psychrobacter cryohalolentis (strain ATCC BAA-1226 / DSM 17306 / VKM B-2378 / K5).